Here is a 787-residue protein sequence, read N- to C-terminus: Disintegrin and metalloproteinase domain-containing protein 32 (787 aa).

Positions 1–16 (MFRLWLLLAGLCGLLA) are cleaved as a signal peptide. At S17 the chain carries Phosphoserine. Positions 17 to 174 (SRPGFQNSLL…PMDDNIFISE (158 aa)) are excised as a propeptide. 2 N-linked (GlcNAc...) asparagine glycosylation sites follow: N39 and N125. Residues 175–682 (KSEPAVPDLF…ERASGKTENT (508 aa)) lie on the Extracellular side of the membrane. Residues 186-383 (LYLEMHIVVD…VGVKCLQNKP (198 aa)) form the Peptidase M12B domain. Intrachain disulfides connect C295-C378, C337-C362, C339-C344, and C450-C471. The 89-residue stretch at 391–479 (KPVCGNGRLE…ECGPDITLIN (89 aa)) folds into the Disintegrin domain. N-linked (GlcNAc...) asparagine glycans are attached at residues N465 and N598. An EGF-like domain is found at 622–654 (SAHVCSQQCSGHGVCDSRNKCHCSPGYKPPNCQ). 3 cysteine pairs are disulfide-bonded: C626-C636, C630-C642, and C644-C653. Residues 683–703 (WLLGFLIALPILIVTTAIVLA) form a helical membrane-spanning segment. Topologically, residues 704–787 (RKQLKKWFAK…DSTQTQSSSN (84 aa)) are cytoplasmic. Positions 715 to 787 (EEFPSSESKS…DSTQTQSSSN (73 aa)) are disordered. A compositionally biased stretch (polar residues) spans 728-749 (TQTYASQSSSEGSTQTYASQTR). The span at 771 to 787 (TSRSKSQDSTQTQSSSN) shows a compositional bias: low complexity.

In terms of tissue distribution, testis specific.

The protein resides in the membrane. Functionally, may play a role in sperm development and fertilization This is a non-catalytic metalloprotease-like protein. The polypeptide is Disintegrin and metalloproteinase domain-containing protein 32 (ADAM32) (Homo sapiens (Human)).